The primary structure comprises 164 residues: 6,7-dimethyl-8-ribityllumazine synthase (164 aa).

5-amino-6-(D-ribitylamino)uracil contacts are provided by residues tyrosine 27, 58-60 (ALE), and 87-89 (CVI). Residue 92 to 93 (ET) participates in (2S)-2-hydroxy-3-oxobutyl phosphate binding. Histidine 95 acts as the Proton donor in catalysis. Asparagine 120 provides a ligand contact to 5-amino-6-(D-ribitylamino)uracil. Residue arginine 134 coordinates (2S)-2-hydroxy-3-oxobutyl phosphate.

It belongs to the DMRL synthase family.

It carries out the reaction (2S)-2-hydroxy-3-oxobutyl phosphate + 5-amino-6-(D-ribitylamino)uracil = 6,7-dimethyl-8-(1-D-ribityl)lumazine + phosphate + 2 H2O + H(+). Its pathway is cofactor biosynthesis; riboflavin biosynthesis; riboflavin from 2-hydroxy-3-oxobutyl phosphate and 5-amino-6-(D-ribitylamino)uracil: step 1/2. Its function is as follows. Catalyzes the formation of 6,7-dimethyl-8-ribityllumazine by condensation of 5-amino-6-(D-ribitylamino)uracil with 3,4-dihydroxy-2-butanone 4-phosphate. This is the penultimate step in the biosynthesis of riboflavin. In Methylocella silvestris (strain DSM 15510 / CIP 108128 / LMG 27833 / NCIMB 13906 / BL2), this protein is 6,7-dimethyl-8-ribityllumazine synthase.